The chain runs to 155 residues: Arginine repressor (155 aa).

It belongs to the ArgR family.

It is found in the cytoplasm. The protein operates within amino-acid biosynthesis; L-arginine biosynthesis [regulation]. Its function is as follows. Regulates arginine biosynthesis genes. The sequence is that of Arginine repressor from Histophilus somni (strain 129Pt) (Haemophilus somnus).